Reading from the N-terminus, the 1181-residue chain is WD repeat-containing protein 35 (1181 aa).

WD repeat units lie at residues 4–43 (YLSK…VLKL), 61–100 (LSMN…VWML), 105–143 (WIEE…IVGS), 147–185 (NRIW…IYDN), 193–241 (MKLS…IMRH), and 246–288 (NPVL…IVQF).

Component of the IFT complex A (IFT-A) complex. IFT-A complex is divided into a core subcomplex composed of IFT122:IFT140:WDR19 which is associated with TULP3 and a peripheral subcomplex composed of IFT43:WDR35:TTC21B. Interacts directy with IFT122, ITF43 and TTC21B. Interacts with IFT43. Interacts with CFAP61.

The protein localises to the cytoplasm. It is found in the cytoskeleton. It localises to the microtubule organizing center. Its subcellular location is the centrosome. The protein resides in the cilium axoneme. The protein localises to the cilium basal body. In terms of biological role, as a component of the IFT complex A (IFT-A), a complex required for retrograde ciliary transport and entry into cilia of G protein-coupled receptors (GPCRs), it is involved in ciliogenesis and ciliary protein trafficking. May promote CASP3 activation and TNF-stimulated apoptosis. The chain is WD repeat-containing protein 35 from Homo sapiens (Human).